An 80-amino-acid chain; its full sequence is UPF0057 membrane protein ZK632.10 (80 aa).

Helical transmembrane passes span 4 to 24 (ILLA…DVGC) and 32 to 52 (ILLT…IILC).

This sequence belongs to the UPF0057 (PMP3) family.

It is found in the membrane. This chain is UPF0057 membrane protein ZK632.10, found in Caenorhabditis elegans.